The chain runs to 396 residues: 1-deoxy-D-xylulose 5-phosphate reductoisomerase (396 aa).

Residues Thr13, Gly14, Ser15, Ile16, and Asn127 each contribute to the NADPH site. Residue Lys128 coordinates 1-deoxy-D-xylulose 5-phosphate. Glu129 is a binding site for NADPH. Asp153 serves as a coordination point for Mn(2+). 1-deoxy-D-xylulose 5-phosphate contacts are provided by Ser154, Glu155, Ser184, and His207. Glu155 is a binding site for Mn(2+). Gly213 serves as a coordination point for NADPH. 4 residues coordinate 1-deoxy-D-xylulose 5-phosphate: Ser220, Asn225, Lys226, and Glu229. Glu229 contributes to the Mn(2+) binding site.

This sequence belongs to the DXR family. Mg(2+) serves as cofactor. The cofactor is Mn(2+).

It catalyses the reaction 2-C-methyl-D-erythritol 4-phosphate + NADP(+) = 1-deoxy-D-xylulose 5-phosphate + NADPH + H(+). Its pathway is isoprenoid biosynthesis; isopentenyl diphosphate biosynthesis via DXP pathway; isopentenyl diphosphate from 1-deoxy-D-xylulose 5-phosphate: step 1/6. Catalyzes the NADPH-dependent rearrangement and reduction of 1-deoxy-D-xylulose-5-phosphate (DXP) to 2-C-methyl-D-erythritol 4-phosphate (MEP). The protein is 1-deoxy-D-xylulose 5-phosphate reductoisomerase of Pseudomonas paraeruginosa (strain DSM 24068 / PA7) (Pseudomonas aeruginosa (strain PA7)).